Here is a 245-residue protein sequence, read N- to C-terminus: rRNA adenine N-6-methyltransferase (245 aa).

6 residues coordinate S-adenosyl-L-methionine: Asn-10, Leu-12, Gly-37, Glu-58, Asp-83, and Ser-100.

The protein belongs to the class I-like SAM-binding methyltransferase superfamily. rRNA adenine N(6)-methyltransferase family.

The enzyme catalyses adenosine(2085) in 23S rRNA + 2 S-adenosyl-L-methionine = N(6)-dimethyladenosine(2085) in 23S rRNA + 2 S-adenosyl-L-homocysteine + 2 H(+). Its function is as follows. This protein produces a dimethylation of the adenine residue at position 2085 in 23S rRNA, resulting in reduced affinity between ribosomes and macrolide-lincosamide-streptogramin B antibiotics. This Clostridium perfringens protein is rRNA adenine N-6-methyltransferase (ermBP).